The primary structure comprises 80 residues: Probable antimicrobial peptide clone Con10 (80 aa).

The N-terminal stretch at 1 to 24 (MQYKTKTFLVIFLAYLVVTNEAEA) is a signal peptide. Residues 56-80 (EIEDFFDPYQRELDLELERLLSQLQ) constitute a propeptide that is removed on maturation.

This sequence belongs to the non-disulfide-bridged peptide (NDBP) superfamily. Medium-length antimicrobial peptide (group 3) family. As to expression, expressed by the venom gland.

It localises to the secreted. Its subcellular location is the target cell membrane. In terms of biological role, antimicrobial peptide. Has antifungal activity against all strains tested (MIC=12.5-200 uM). May act by disrupting the integrity of the bacterial cell membrane. In Opisthacanthus cayaporum (South American scorpion), this protein is Probable antimicrobial peptide clone Con10.